The primary structure comprises 496 residues: Acetyltransferase adrJ (496 aa).

Residues His-174 and Asp-421 each act as proton acceptor in the active site.

This sequence belongs to the plant acyltransferase family. Monomer.

Its pathway is secondary metabolite biosynthesis; terpenoid biosynthesis. In terms of biological role, acetyltransferase; part of the gene cluster that mediates the biosynthesis of andrastins, meroterpenoid compounds that exhibit inhibitory activity against ras farnesyltransferase, suggesting that they could be promising leads for antitumor agents. The first step of the pathway is the synthesis of 3,5-dimethylorsellinic acid (DMOA) by the polyketide synthase adrD via condensation of one acetyl-CoA starter unit with 3 malonyl-CoA units and 2 methylations. DMAO is then converted to farnesyl-DMAO by the prenyltransferase adrG. The methyltransferase adrK catalyzes the methylation of the carboxyl group of farnesyl-DMAO to farnesyl-DMAO methyl ester which is further converted to epoxyfarnesyl-DMAO methyl ester by the FAD-dependent monooxygenase adrH. The terpene cyclase adrI then catalyzes the carbon skeletal rearrangement to generate the andrastin E, the first compound in the pathway having the andrastin scaffold, with the tetracyclic ring system. The post-cyclization tailoring enzymes adrF, adrE, adrJ, and adrA, are involved in the conversion of andrastin E into andrastin A. The short chain dehydrogenase adrF is responsible for the oxidation of the C-3 a hydroxyl group of andrastin E to yield the corresponding ketone, andrastin D. The ketoreductase adrE stereoselectively reduces the carbonyl moiety to reverse the stereochemistry of the C-3 position to yield andrastin F. The acetyltransferase adrJ is the acetyltransferase that attaches the acetyl group to the C-3 hydroxyl group of andrastin F to yield andrastin C. Finally, the cytochrome P450 monooxygenase adrA catalyzes two sequential oxidation reactions of the C-23 methyl group, to generate the corresponding alcohol andrastin B, and aldehyde andrastin A. The sequence is that of Acetyltransferase adrJ from Penicillium roqueforti.